We begin with the raw amino-acid sequence, 843 residues long: Eisosome protein 1 (843 aa).

The segment at Met1–Pro54 is disordered. An N-acetylserine modification is found at Ser2. Ser2 carries the phosphoserine modification. Over residues Lys33–Lys46 the composition is skewed to basic residues. Residues Ser88 and Ser130 each carry the phosphoserine modification. A disordered region spans residues Lys120–Arg176. 2 stretches are compositionally biased toward polar residues: residues Arg127–Lys137 and Thr163–Arg176. A phosphoserine mark is found at Ser182, Ser401, Ser584, and Ser710. The tract at residues Asp717–Lys843 is disordered. Thr720 bears the Phosphothreonine mark. Positions Ser752 to Ala764 are enriched in low complexity. Ser763 and Ser775 each carry phosphoserine. Positions Ser781–Glu797 are enriched in basic and acidic residues. Residues Ile798 to Leu810 are compositionally biased toward polar residues. A phosphoserine mark is found at Ser816, Ser828, Ser829, and Ser838.

This sequence belongs to the EIS1 family.

The protein localises to the cytoplasmic granule. The protein resides in the cell membrane. In terms of biological role, required for normal formation of eisosomes, large cytoplasmic protein assemblies that localize to specialized domains on plasma membrane and mark the site of endocytosis. This chain is Eisosome protein 1 (EIS1), found in Saccharomyces cerevisiae (strain JAY291) (Baker's yeast).